The primary structure comprises 392 residues: Outer membrane protein assembly factor BamB (392 aa).

Positions 1–19 are cleaved as a signal peptide; it reads MQLRKLLLPGLLSVTLLSG. Residue Cys-20 is the site of N-palmitoyl cysteine attachment. Residue Cys-20 is the site of S-diacylglycerol cysteine attachment.

The protein belongs to the BamB family. In terms of assembly, part of the Bam complex, which is composed of the outer membrane protein BamA, and four lipoproteins BamB, BamC, BamD and BamE. Monomer. Interacts directly with BamA. The Bam complex has the shape of a hat, with the BamA beta-barrel crown in the outer membrane and the periplasmic brim formed by the BamA POTRA domains and the 4 lipoproteins.

The protein localises to the cell outer membrane. Its function is as follows. Part of the outer membrane protein assembly complex (Bam), which is involved in assembly and insertion of beta-barrel proteins into the outer membrane. Nonessential member of the complex, which may orient the flexible periplasmic domain of BamA for interaction with other Bam components, chaperones and nascent outer membrane proteins. Efficient substrate folding and insertion into the outer membrane requires all 5 subunits. A lateral gate may open between the first and last strands of the BamA beta-barrel that allows substrate to insert into the outer membrane; comparison of the structures of complete and nearly complete Bam complexes show there is considerable movement of all 5 proteins. This Escherichia coli (strain K12) protein is Outer membrane protein assembly factor BamB.